We begin with the raw amino-acid sequence, 288 residues long: Dichloromethane dehalogenase (288 aa).

One can recognise a GST N-terminal domain in the interval 12–94 (KTLRLLYHPA…YVNEKFDGAG (83 aa)). Residues 100–252 (GTQERAQINQ…ASMFKRKTAV (153 aa)) form the GST C-terminal domain.

Belongs to the GST superfamily. In terms of assembly, homohexamer.

It localises to the cytoplasm. It catalyses the reaction dichloromethane + H2O = formaldehyde + 2 chloride + 2 H(+). It participates in xenobiotic degradation; dichloromethane degradation. In Methylorubrum extorquens (strain DSM 6343 / CIP 106787 / DM4) (Methylobacterium extorquens), this protein is Dichloromethane dehalogenase (dcmA).